The chain runs to 107 residues: MGRKRLITDSYPVVKRREGSAGHSKGELAPDLGEEPLPLSVDEEELELLRQFDLAWQYGPCTGITRLQRWHRAEQMGLKPPPEVHQVLQSHPGDPRFQCSLWHFYPL.

Positions 1-16 (MGRKRLITDSYPVVKR) match the PCNA-interaction protein motif (PIP box) motif. Residues 1–35 (MGRKRLITDSYPVVKRREGSAGHSKGELAPDLGEE) are disordered. Positions 15–28 (KRREGSAGHSKGEL) are enriched in basic and acidic residues.

The protein belongs to the DNA polymerase delta subunit 4 family. Component of the tetrameric DNA polymerase delta complex (Pol-delta4), which consists of POLD1/p125, POLD2/p50, POLD3/p66/p68 and POLD4/p12, with POLD1 bearing DNA polymerase and 3' to 5' proofreading exonuclease activities. Within this complex, directly interacts with POLD1 and POLD2. Directly interacts with PCNA, as do POLD1 and POLD3; this interaction stimulates Pol-delta4 polymerase activity. As POLD1 and POLD2, directly interacts with WRNIP1; this interaction stimulates DNA polymerase delta-mediated DNA synthesis, independently of the presence of PCNA, possibly by increasing initiation frequency. Upon genotoxic stress induced by DNA damaging agents or by replication stress, POLD4 is proteolytically degraded and Pol-delta4 is converted into a trimeric form of the complex (Pol-delta3) that has an increased proofreading activity. The DNA polymerase delta complex interacts with POLDIP2; this interaction is probably mediated through direct binding to POLD2. Ubiquitinated; undergoes 'Lys-48'-linked ubiquitination in response to UV irradiation, leading to proteasomal degradation. This modification is partly mediated by RNF8 and by the DCX(DTL) E3 ubiquitin ligase complex (also called CRL4(CDT2)). Efficient degradation requires the presence of PCNA and is required for the inhibition of fork progression after DNA damage.

It is found in the nucleus. As a component of the tetrameric DNA polymerase delta 4 complex (Pol-delta4), plays a role in high fidelity genome replication and repair. Within this complex, increases the rate of DNA synthesis and decreases fidelity by regulating POLD1 polymerase and proofreading 3' to 5' exonuclease activity. Pol-delta4 participates in Okazaki fragment processing, through both the short flap pathway, as well as a nick translation system. Under conditions of DNA replication stress, required for the repair of broken replication forks through break-induced replication (BIR), a mechanism that may induce segmental genomic duplications of up to 200 kb. Involved in Pol-delta4 translesion synthesis (TLS) of templates carrying O6-methylguanine or abasic sites. Its degradation in response to DNA damage is required for the inhibition of fork progression and cell survival. In Bos taurus (Bovine), this protein is DNA polymerase delta subunit 4 (POLD4).